The following is a 755-amino-acid chain: 3-isopropylmalate dehydratase (755 aa).

Cys353, Cys413, and Cys416 together coordinate [4Fe-4S] cluster. Disordered stretches follow at residues 427–446, 471–493, and 510–529; these read GERC…GAGG, LTPA…ELEP, and DAPA…AAGM. The span at 510–528 shows a compositional bias: low complexity; the sequence is DAPATGASPPSPAPSDAAG.

Belongs to the aconitase/IPM isomerase family. Monomer. Requires [4Fe-4S] cluster as cofactor.

It carries out the reaction (2R,3S)-3-isopropylmalate = (2S)-2-isopropylmalate. It functions in the pathway amino-acid biosynthesis; L-leucine biosynthesis; L-leucine from 3-methyl-2-oxobutanoate: step 2/4. In terms of biological role, catalyzes the isomerization between 2-isopropylmalate and 3-isopropylmalate, via the formation of 2-isopropylmaleate. In Rhizomucor pusillus, this protein is 3-isopropylmalate dehydratase (LEUA).